Reading from the N-terminus, the 210-residue chain is Peroxynitrite isomerase (210 aa).

Positions 21 to 27 match the GXWXGXG motif; that stretch reads GQWEGQG. H190 contributes to the heme b binding site.

It belongs to the nitrobindin family. In terms of assembly, homodimer. The cofactor is heme b.

It catalyses the reaction peroxynitrite = nitrate. It participates in nitrogen metabolism. In terms of biological role, heme-binding protein able to scavenge peroxynitrite and to protect free L-tyrosine against peroxynitrite-mediated nitration, by acting as a peroxynitrite isomerase that converts peroxynitrite to nitrate. Therefore, this protein likely plays a role in peroxynitrite sensing and in the detoxification of reactive nitrogen and oxygen species (RNS and ROS, respectively). Is able to bind nitric oxide (NO) in vitro, but may act as a sensor of peroxynitrite levels in vivo. This chain is Peroxynitrite isomerase, found in Renibacterium salmoninarum (strain ATCC 33209 / DSM 20767 / JCM 11484 / NBRC 15589 / NCIMB 2235).